Reading from the N-terminus, the 90-residue chain is MKTAIFTVVLALAVFAVLSFGWEANEKALSEEFTELIHEKEAASETEARECRYFWGECHDHMPCCDWFVCRYKWPITYNICVWNRTFPEK.

An N-terminal signal peptide occupies residues 1–19 (MKTAIFTVVLALAVFAVLS). A propeptide spanning residues 20–50 (FGWEANEKALSEEFTELIHEKEAASETEARE) is cleaved from the precursor. Intrachain disulfides connect cysteine 51–cysteine 65, cysteine 58–cysteine 70, and cysteine 64–cysteine 81.

The protein belongs to the neurotoxin 10 (Hwtx-1) family. 13 (Hntx-13) subfamily. As to expression, expressed by the venom gland.

It is found in the secreted. In terms of biological role, ion channel inhibitor. In Cyriopagopus hainanus (Chinese bird spider), this protein is U7-theraphotoxin-Hhn1b.